The following is a 533-amino-acid chain: Protein mono-ADP-ribosyltransferase PARP3 (533 aa).

The disordered stretch occupies residues Met-1–Thr-30. An N6-(ADP-ribosyl)lysine modification is found at Lys-6. Glu-12 carries the ADP-ribosyl glutamic acid modification. The Nuclear localization signal signature appears at Ser-14–Arg-18. ADP-ribosyl glutamic acid is present on residues Glu-24 and Glu-32. In terms of domain architecture, WGR spans Gly-57–Tyr-147. ADP-ribosyl aspartic acid is present on Asp-138. An ADP-ribosyl glutamic acid mark is found at Glu-160, Glu-230, Glu-309, and Glu-310. The PARP alpha-helical domain occupies Pro-181 to Ala-299. Positions His-313 to Leu-533 constitute a PARP catalytic domain.

Belongs to the ARTD/PARP family. In terms of assembly, interacts with PARP1; leading to activate PARP1 in absence of DNA. Interacts with PRKDC. Interacts with XRCC5/Ku80; the interaction is dependent on nucleic acids. Interacts with XRCC6/Ku70; the interaction is dependent on nucleic acids. Interacts with EZH2, HDAC1, HDAC2, SUZ12, YY1, LRIG3 and LIG4. Post-translationally, auto-ADP-ribosylated.

The protein localises to the nucleus. It localises to the chromosome. Its subcellular location is the cytoplasm. It is found in the cytoskeleton. The protein resides in the microtubule organizing center. The protein localises to the centrosome. It localises to the centriole. It catalyses the reaction L-aspartyl-[protein] + NAD(+) = 4-O-(ADP-D-ribosyl)-L-aspartyl-[protein] + nicotinamide. The enzyme catalyses L-glutamyl-[protein] + NAD(+) = 5-O-(ADP-D-ribosyl)-L-glutamyl-[protein] + nicotinamide. It carries out the reaction L-lysyl-[protein] + NAD(+) = N(6)-(ADP-D-ribosyl)-L-lysyl-[protein] + nicotinamide + H(+). Its function is as follows. Mono-ADP-ribosyltransferase that mediates mono-ADP-ribosylation of target proteins and plays a key role in the response to DNA damage. Mediates mono-ADP-ribosylation of glutamate, aspartate or lysine residues on target proteins. In contrast to PARP1 and PARP2, it is not able to mediate poly-ADP-ribosylation. Involved in DNA repair by mediating mono-ADP-ribosylation of a limited number of acceptor proteins involved in chromatin architecture and in DNA metabolism, such as histone H2B, XRCC5 and XRCC6. ADP-ribosylation follows DNA damage and appears as an obligatory step in a detection/signaling pathway leading to the reparation of DNA strand breaks. Involved in single-strand break repair by catalyzing mono-ADP-ribosylation of histone H2B on 'Glu-2' (H2BE2ADPr) of nucleosomes containing nicked DNA. Cooperates with the XRCC5-XRCC6 (Ku80-Ku70) heterodimer to limit end-resection thereby promoting accurate NHEJ. Suppresses G-quadruplex (G4) structures in response to DNA damage. Associates with a number of DNA repair factors and is involved in the response to exogenous and endogenous DNA strand breaks. Together with APLF, promotes the retention of the LIG4-XRCC4 complex on chromatin and accelerate DNA ligation during non-homologous end-joining (NHEJ). May link the DNA damage surveillance network to the mitotic fidelity checkpoint. Acts as a negative regulator of immunoglobulin class switch recombination, probably by controlling the level of AICDA /AID on the chromatin. In addition to proteins, also able to ADP-ribosylate DNA: mediates DNA mono-ADP-ribosylation of DNA strand break termini via covalent addition of a single ADP-ribose moiety to a 5'- or 3'-terminal phosphate residues in DNA containing multiple strand breaks. The protein is Protein mono-ADP-ribosyltransferase PARP3 of Mus musculus (Mouse).